We begin with the raw amino-acid sequence, 268 residues long: Tropinone reductase homolog (268 aa).

Residue 21 to 45 (LVTGGTRGIGYAIVEELANFGAEVY) coordinates NADP(+). Serine 154 is a substrate binding site. Tyrosine 167 serves as the catalytic Proton acceptor.

Belongs to the short-chain dehydrogenases/reductases (SDR) family.

The polypeptide is Tropinone reductase homolog (Datura stramonium (Jimsonweed)).